A 420-amino-acid chain; its full sequence is LanC-like protein 3 (420 aa).

It belongs to the LanC-like protein family.

In Mus musculus (Mouse), this protein is LanC-like protein 3 (Lancl3).